The following is a 242-amino-acid chain: 7-cyano-7-deazaguanine synthase (242 aa).

A disordered region spans residues 1-25; sequence MNSRKDKNSKGKNSDTKRKKSSQEN. 32-42 contributes to the ATP binding site; it reads LSGGLDSTTCL. Residues Cys-212, Cys-221, Cys-224, and Cys-227 each coordinate Zn(2+).

The protein belongs to the QueC family. Zn(2+) serves as cofactor.

The enzyme catalyses 7-carboxy-7-deazaguanine + NH4(+) + ATP = 7-cyano-7-deazaguanine + ADP + phosphate + H2O + H(+). It functions in the pathway purine metabolism; 7-cyano-7-deazaguanine biosynthesis. In terms of biological role, catalyzes the ATP-dependent conversion of 7-carboxy-7-deazaguanine (CDG) to 7-cyano-7-deazaguanine (preQ(0)). This chain is 7-cyano-7-deazaguanine synthase, found in Leptospira borgpetersenii serovar Hardjo-bovis (strain JB197).